Consider the following 180-residue polypeptide: MIIYLHGFDSNSPGNHEKVMQLQFIDPDVRLISYSTRHPKHDMQHLLKEVDKMLQLTADDRPLICGVGLGGYWAERIGFLCDIRQAVFNPNLFPHENMEGKIDRPEEYADIATKCVTNFREKNRDRCLVVLSRQDEALDSQRSADLLHHYYEIIWDEEQTHKFKNISPHLQRLKAFKTLG.

Belongs to the UPF0227 family.

In Klebsiella pneumoniae subsp. pneumoniae (strain ATCC 700721 / MGH 78578), this protein is UPF0227 protein KPN78578_10770.